Consider the following 330-residue polypeptide: Beta-ketoacyl-[acyl-carrier-protein] synthase III (330 aa).

Active-site residues include Cys-116 and His-257. The tract at residues Gln-258–Arg-262 is ACP-binding. Asn-287 is a catalytic residue.

Belongs to the thiolase-like superfamily. FabH family. Homodimer.

Its subcellular location is the cytoplasm. The enzyme catalyses malonyl-[ACP] + acetyl-CoA + H(+) = 3-oxobutanoyl-[ACP] + CO2 + CoA. Its pathway is lipid metabolism; fatty acid biosynthesis. In terms of biological role, catalyzes the condensation reaction of fatty acid synthesis by the addition to an acyl acceptor of two carbons from malonyl-ACP. Catalyzes the first condensation reaction which initiates fatty acid synthesis and may therefore play a role in governing the total rate of fatty acid production. Possesses both acetoacetyl-ACP synthase and acetyl transacylase activities. Its substrate specificity determines the biosynthesis of branched-chain and/or straight-chain of fatty acids. The chain is Beta-ketoacyl-[acyl-carrier-protein] synthase III from Synechocystis sp. (strain ATCC 27184 / PCC 6803 / Kazusa).